A 491-amino-acid chain; its full sequence is Glutamyl-tRNA(Gln) amidotransferase subunit A (491 aa).

Catalysis depends on charge relay system residues K77 and S152. The active-site Acyl-ester intermediate is S176.

It belongs to the amidase family. GatA subfamily. As to quaternary structure, heterotrimer of A, B and C subunits.

It carries out the reaction L-glutamyl-tRNA(Gln) + L-glutamine + ATP + H2O = L-glutaminyl-tRNA(Gln) + L-glutamate + ADP + phosphate + H(+). Functionally, allows the formation of correctly charged Gln-tRNA(Gln) through the transamidation of misacylated Glu-tRNA(Gln) in organisms which lack glutaminyl-tRNA synthetase. The reaction takes place in the presence of glutamine and ATP through an activated gamma-phospho-Glu-tRNA(Gln). The protein is Glutamyl-tRNA(Gln) amidotransferase subunit A of Chlamydia trachomatis serovar L2 (strain ATCC VR-902B / DSM 19102 / 434/Bu).